Consider the following 406-residue polypeptide: Cysteine desulfurase (406 aa).

Position 226 is an N6-(pyridoxal phosphate)lysine (Lys226). The Cysteine persulfide intermediate role is filled by Cys364.

It belongs to the class-V pyridoxal-phosphate-dependent aminotransferase family. Csd subfamily. As to quaternary structure, homodimer. Interacts with SufE and the SufBCD complex composed of SufB, SufC and SufD. The interaction with SufE is required to mediate the direct transfer of the sulfur atom from the S-sulfanylcysteine. The cofactor is pyridoxal 5'-phosphate.

It is found in the cytoplasm. The catalysed reaction is (sulfur carrier)-H + L-cysteine = (sulfur carrier)-SH + L-alanine. It catalyses the reaction L-selenocysteine + AH2 = hydrogenselenide + L-alanine + A + H(+). It functions in the pathway cofactor biosynthesis; iron-sulfur cluster biosynthesis. Cysteine desulfurases mobilize the sulfur from L-cysteine to yield L-alanine, an essential step in sulfur metabolism for biosynthesis of a variety of sulfur-containing biomolecules. Component of the suf operon, which is activated and required under specific conditions such as oxidative stress and iron limitation. Acts as a potent selenocysteine lyase in vitro, that mobilizes selenium from L-selenocysteine. Selenocysteine lyase activity is however unsure in vivo. The chain is Cysteine desulfurase from Yersinia pseudotuberculosis serotype IB (strain PB1/+).